The following is a 95-amino-acid chain: Histone-like DNA-binding protein (95 aa).

It belongs to the bacterial histone-like protein family.

The sequence is that of Histone-like DNA-binding protein from Rickettsia typhi (strain ATCC VR-144 / Wilmington).